A 656-amino-acid chain; its full sequence is Protein arginine N-methyltransferase 7 (656 aa).

2 SAM-dependent MTase PRMT-type domains span residues 12 to 338 (EREW…FSIW) and 343 to 656 (GKDS…QSGN).

Belongs to the class I-like SAM-binding methyltransferase superfamily. Protein arginine N-methyltransferase family. PRMT7 subfamily.

Its function is as follows. Arginine methyltransferase that can both catalyze the formation of omega-N monomethylarginine (MMA) and symmetrical dimethylarginine (sDMA). The chain is Protein arginine N-methyltransferase 7 (prmt-7) from Caenorhabditis briggsae.